The primary structure comprises 506 residues: Chorion-specific transcription factor GCMb (506 aa).

A DNA-binding region (GCM) is located at residues 19–174 (LSWDINDPQM…KSETEARRSA (156 aa)). 8 residues coordinate Zn(2+): cysteine 81, cysteine 87, cysteine 91, cysteine 118, cysteine 121, cysteine 130, histidine 157, and histidine 159. Over residues 155 to 172 (GVHDHPRPESKSETEARR) the composition is skewed to basic and acidic residues. The segment at 155 to 213 (GVHDHPRPESKSETEARRSAIKRQMASFYQPQKKRIRESEAEENQDSSGHFSNIPPLEN) is disordered. A C-terminal conserved inhibitory domain (CCID) region spans residues 379–395 (LQTVITTTTKVSYQAYQ).

It is found in the nucleus. In terms of biological role, transcription factor that binds specific sequences on gene promoters and activate their transcription. Through the regulation of gene transcription, may play a role in parathyroid gland development. This Homo sapiens (Human) protein is Chorion-specific transcription factor GCMb.